The primary structure comprises 350 residues: Histidinol-phosphate aminotransferase (350 aa).

Residue lysine 209 is modified to N6-(pyridoxal phosphate)lysine.

It belongs to the class-II pyridoxal-phosphate-dependent aminotransferase family. Histidinol-phosphate aminotransferase subfamily. Homodimer. Pyridoxal 5'-phosphate serves as cofactor.

It carries out the reaction L-histidinol phosphate + 2-oxoglutarate = 3-(imidazol-4-yl)-2-oxopropyl phosphate + L-glutamate. It functions in the pathway amino-acid biosynthesis; L-histidine biosynthesis; L-histidine from 5-phospho-alpha-D-ribose 1-diphosphate: step 7/9. This chain is Histidinol-phosphate aminotransferase, found in Christiangramia forsetii (strain DSM 17595 / CGMCC 1.15422 / KT0803) (Gramella forsetii).